The sequence spans 504 residues: MSFSVDVLANIAIELQRGIGHQDRFQRLITTLRQVLECDASALLRYDSRQFIPLAIDGLAKDVLGRRFALEGHPRLEAIARAGDVVRFPADSELPDPYDGLIPGQESLKVHACVGLPLFAGQNLIGALTLDGMQPDQFDVFSDEELRLIAALAAGALSNALLIEQLESQNMLPGDATPFEAVKQTQMIGLSPGMTQLKKEIEIVAASDLNVLISGETGTGKELVAKAIHEASPRAVNPLVYLNCAALPESVAESELFGHVKGAFTGAISNRSGKFEMADNGTLFLDEIGELSLALQAKLLRVLQYGDIQRVGDDRSLRVDVRVLAATNRDLREEVLAGRFRADLFHRLSVFPLSVPPLRERGDDVILLAGYFCEQCRLRLGLSRVVLSAGARNLLQHYRFPGNVRELEHAIHRAVVLARATRNGDEVILEAQHFAFPEVTLPPPEAAAVPVVKQNLREATEAFQRETIRQALAQNHHNWAACARMLETDVANLHRLAKRLGMKD.

Residue aspartate 57 is modified to 4-aspartylphosphate. The Sigma-54 factor interaction domain occupies 187–416 (MIGLSPGMTQ…LEHAIHRAVV (230 aa)). Residues 215-222 (GETGTGKE) and 278-287 (ADNGTLFLDE) each bind ATP. Positions 479-498 (WAACARMLETDVANLHRLAK) form a DNA-binding region, H-T-H motif.

It participates in nitrogen metabolism; nitric oxide reduction. Functionally, required for the expression of anaerobic nitric oxide (NO) reductase, acts as a transcriptional activator for at least the norVW operon. Activation also requires sigma-54. The polypeptide is Anaerobic nitric oxide reductase transcription regulator NorR (Escherichia coli O9:H4 (strain HS)).